Reading from the N-terminus, the 349-residue chain is Sexual stage-specific protein G37 (349 aa).

Positions 1–18 (MKLYLVTFLFFVIYKNKT) are cleaved as a signal peptide. Residues 19–91 (FVDCVTKKQD…INQVSNNIMR (73 aa)) lie on the Extracellular side of the membrane. A helical membrane pass occupies residues 92–112 (VYISLLSLFLFPYFSYIGIFG). The Cytoplasmic portion of the chain corresponds to 113 to 117 (HSRNK). The chain crosses the membrane as a helical span at residues 118 to 138 (ANLTLSSLLAYFALLVSFFLF). Topologically, residues 139 to 140 (NG) are extracellular. A helical transmembrane segment spans residues 141–161 (ILNIGFVTSLPLVVAVLIFIL). At 162–176 (GVSDCEINFLYKYTR) the chain is on the cytoplasmic side. Residues 177 to 197 (YIFCFIISKLIYDVVTYISKD) form a helical membrane-spanning segment. The Extracellular segment spans residues 198–218 (GANIFDYGFSGHIYMNLLRGK). The chain crosses the membrane as a helical span at residues 219–239 (YYIVLKLIHLIILSLISLIII). The Cytoplasmic portion of the chain corresponds to 240-262 (KICPKIFSNNHLKSPISITFDKY). The helical transmembrane segment at 263 to 283 (IISFLCSLPIATAISQVFYLL) threads the bilayer. Topologically, residues 284 to 305 (SKTINPIDPSIFFMIPSSINFS) are extracellular. A helical transmembrane segment spans residues 306-326 (STGTIFSLSIWILMSYLMTFL). Over 327 to 349 (RNKVEADFNNILNKIPNNLPDFI) the chain is Cytoplasmic.

It localises to the cell membrane. In terms of biological role, involved in the development of male gametocytes. The polypeptide is Sexual stage-specific protein G37 (Plasmodium berghei (strain Anka)).